The chain runs to 685 residues: ATP-dependent permease MDL1 (685 aa).

A compositionally biased stretch (polar residues) spans 48-70; the sequence is FNSKSSTAPNTEANSNGSTNSQS. Positions 48 to 76 are disordered; the sequence is FNSKSSTAPNTEANSNGSTNSQSDTKKPR. An N-linked (GlcNAc...) asparagine glycan is attached at asparagine 63. Residues 96 to 116 form a helical membrane-spanning segment; sequence LIFFALICLVTTSATSMALPL. Positions 97–407 constitute an ABC transmembrane type-1 domain; sequence IFFALICLVT…LGNFYTELMK (311 aa). The tract at residues 125–147 is disordered; that stretch reads TKKDDDDDKDNDNDDKDDTQPSD. The span at 129–141 shows a compositional bias: acidic residues; sequence DDDDKDNDNDDKD. The helical transmembrane segment at 158 to 180 threads the bilayer; that stretch reads FYSALGVLFIVSASTNFGRIYLL. The N-linked (GlcNAc...) asparagine glycan is linked to asparagine 239. Residues 266-282 form a helical membrane-spanning segment; that stretch reads LCMSLIFPPLITMSWFY. Asparagine 336 is a glycosylation site (N-linked (GlcNAc...) asparagine). 2 helical membrane-spanning segments follow: residues 353-373 and 381-401; these read GFIGNVTMIGLLIMGTKLIGA and LSSFMMYAVYTGTSVFGLGNF. One can recognise an ABC transporter domain in the interval 440–680; it reads IEFKGIDFTY…PNSQFNKLLK (241 aa). ATP is bound at residue 475-482; the sequence is GPSGSGKS. N-linked (GlcNAc...) asparagine glycosylation is found at asparagine 553 and asparagine 576.

Belongs to the ABC transporter superfamily. ABCB family. Mitochondrial peptide exporter (TC 3.A.1.212) subfamily.

The protein resides in the membrane. The sequence is that of ATP-dependent permease MDL1 (MDL1) from Candida albicans (Yeast).